The sequence spans 221 residues: Max dimerization protein 1 (221 aa).

Positions 21 to 49 (RREREAEHGYASMLPYNNKDRDALKRRNK) match the Nuclear localization signal motif. Disordered stretches follow at residues 30-68 (YASM…EKNR) and 173-204 (TGDL…YSST). Positions 56-108 (SSRSTHNEMEKNRRAHLRLCLEKLKGLVPLGPESSRHTTLSLLTKAKLHIKKL) constitute a bHLH domain. Positions 175–184 (DLDWSSSSVS) are enriched in low complexity. Positions 191-204 (SMQSLGSDEGYSST) are enriched in polar residues.

As to quaternary structure, heterodimer with MAX; the interaction is required for DNA-binding. DNA binding requires dimerization with another bHLH protein; does not form homodimers, and does not bind to DNA in the absence of MAX in vitro. Interacts with RNF17. Ubiquitinated by BIRC2/c-IAP1, leading to its subsequent degradation by the proteasome.

It is found in the nucleus. Functionally, component of a transcriptional repressor complex together with MAX. In complex with MAX binds to the core DNA sequence 5'-CAC[GA]TG-3'. Antagonizes MYC transcriptional activity by competing with MYC for MAX binding. Binds to the TERT promoter and represses telomerase expression, possibly by interfering with MYC binding. This chain is Max dimerization protein 1 (MXD1), found in Homo sapiens (Human).